Consider the following 420-residue polypeptide: Glucose-1-phosphate adenylyltransferase (420 aa).

Residues tyrosine 107, glycine 172, 187–188 (EK), and serine 205 each bind alpha-D-glucose 1-phosphate.

It belongs to the bacterial/plant glucose-1-phosphate adenylyltransferase family. In terms of assembly, homotetramer.

The catalysed reaction is alpha-D-glucose 1-phosphate + ATP + H(+) = ADP-alpha-D-glucose + diphosphate. Its pathway is glycan biosynthesis; glycogen biosynthesis. Functionally, involved in the biosynthesis of ADP-glucose, a building block required for the elongation reactions to produce glycogen. Catalyzes the reaction between ATP and alpha-D-glucose 1-phosphate (G1P) to produce pyrophosphate and ADP-Glc. This is Glucose-1-phosphate adenylyltransferase from Rhizobium radiobacter (Agrobacterium tumefaciens).